Reading from the N-terminus, the 317-residue chain is Probable GTP 3',8-cyclase (317 aa).

One can recognise a Radical SAM core domain in the interval 4 to 223 (RYGRPLEDLR…KSEIREKHFR (220 aa)). GTP is bound at residue arginine 13. Cysteine 20, cysteine 24, and cysteine 27 together coordinate [4Fe-4S] cluster. Lysine 61 serves as a coordination point for GTP. S-adenosyl-L-methionine is bound at residue glycine 65. GTP is bound at residue threonine 91. Serine 115 is a binding site for S-adenosyl-L-methionine. Lysine 152 contributes to the GTP binding site. 2 residues coordinate [4Fe-4S] cluster: cysteine 246 and cysteine 249. 251–253 (RVR) is a GTP binding site. Cysteine 263 provides a ligand contact to [4Fe-4S] cluster.

It belongs to the radical SAM superfamily. MoaA family. It depends on [4Fe-4S] cluster as a cofactor.

The catalysed reaction is GTP + AH2 + S-adenosyl-L-methionine = (8S)-3',8-cyclo-7,8-dihydroguanosine 5'-triphosphate + 5'-deoxyadenosine + L-methionine + A + H(+). It participates in cofactor biosynthesis; molybdopterin biosynthesis. Catalyzes the cyclization of GTP to (8S)-3',8-cyclo-7,8-dihydroguanosine 5'-triphosphate. The protein is Probable GTP 3',8-cyclase of Metallosphaera sedula (strain ATCC 51363 / DSM 5348 / JCM 9185 / NBRC 15509 / TH2).